The primary structure comprises 89 residues: Small ribosomal subunit protein uS15 (89 aa).

The segment covering 1–21 (MAISQERKNEIIKEYARHEGD) has biased composition (basic and acidic residues). The tract at residues 1-24 (MAISQERKNEIIKEYARHEGDTGS) is disordered.

This sequence belongs to the universal ribosomal protein uS15 family. As to quaternary structure, part of the 30S ribosomal subunit. Forms a bridge to the 50S subunit in the 70S ribosome, contacting the 23S rRNA.

In terms of biological role, one of the primary rRNA binding proteins, it binds directly to 16S rRNA where it helps nucleate assembly of the platform of the 30S subunit by binding and bridging several RNA helices of the 16S rRNA. Forms an intersubunit bridge (bridge B4) with the 23S rRNA of the 50S subunit in the ribosome. In Enterococcus faecalis (strain ATCC 700802 / V583), this protein is Small ribosomal subunit protein uS15.